The primary structure comprises 189 residues: Interferon alpha-H (189 aa).

The first 23 residues, 1-23 (MAPAWSFLLALLLLSCNAICSLG), serve as a signal peptide directing secretion. Cystine bridges form between C24–C122 and C52–C162.

Belongs to the alpha/beta interferon family.

Its subcellular location is the secreted. In terms of biological role, produced by macrophages, IFN-alpha have antiviral activities. Interferon stimulates the production of two enzymes: a protein kinase and an oligoadenylate synthetase. The polypeptide is Interferon alpha-H (IFNAH) (Bos taurus (Bovine)).